We begin with the raw amino-acid sequence, 242 residues long: ATP synthase subunit a (242 aa).

The next 5 membrane-spanning stretches (helical) occupy residues 21-41, 83-103, 117-137, 175-195, and 198-218; these read LSSI…AIIC, AVTL…FSIV, DATV…FYGI, LYGN…LFFN, and AWGW…SIFV.

This sequence belongs to the ATPase A chain family. In terms of assembly, F-type ATPases have 2 components, CF(1) - the catalytic core - and CF(0) - the membrane proton channel. CF(1) has five subunits: alpha(3), beta(3), gamma(1), delta(1), epsilon(1). CF(0) has three main subunits: a(1), b(2) and c(9-12). The alpha and beta chains form an alternating ring which encloses part of the gamma chain. CF(1) is attached to CF(0) by a central stalk formed by the gamma and epsilon chains, while a peripheral stalk is formed by the delta and b chains.

The protein localises to the cell membrane. Key component of the proton channel; it plays a direct role in the translocation of protons across the membrane. The polypeptide is ATP synthase subunit a (Staphylococcus aureus (strain Newman)).